The chain runs to 262 residues: Catechol O-methyltransferase domain-containing protein 1 (262 aa).

A helical; Signal-anchor for type II membrane protein transmembrane segment spans residues 12-32 (AALALGSAALGAAFATGLLLG). Residues Asp-108, 110 to 111 (GT), Ser-116, Glu-134, Val-135, Ala-163, Asp-185, Asp-187, and Tyr-194 contribute to the S-adenosyl-L-methionine site.

The protein belongs to the class I-like SAM-binding methyltransferase superfamily. Cation-dependent O-methyltransferase family. In terms of assembly, homodimer.

The protein resides in the membrane. In terms of biological role, putative O-methyltransferase. This chain is Catechol O-methyltransferase domain-containing protein 1 (Comtd1), found in Mus musculus (Mouse).